The primary structure comprises 605 residues: Mini-chromosome maintenance complex-binding protein (605 aa).

S147 and S150 each carry phosphoserine.

This sequence belongs to the MCMBP family. In terms of assembly, interacts with the MCM complex.

It is found in the nucleus. Functionally, associated component of the MCM complex that acts as a regulator of DNA replication. Binds to the MCM complex during late S phase and may act by promoting the disassembly of the MCM complex from chromatin. This chain is Mini-chromosome maintenance complex-binding protein, found in Drosophila melanogaster (Fruit fly).